A 121-amino-acid polypeptide reads, in one-letter code: MARVKYGKVKVTRARRKRWIKLAKGYFGTKKSSYKKAHEQVIRSMAYAFIGRKERKRDFRSLWIVRINAAVRPEGLSYSTFMHGLKLANININRKMLSELAINNNEEFKKIVKQAKKALNK.

The protein belongs to the bacterial ribosomal protein bL20 family.

Binds directly to 23S ribosomal RNA and is necessary for the in vitro assembly process of the 50S ribosomal subunit. It is not involved in the protein synthesizing functions of that subunit. This chain is Large ribosomal subunit protein bL20, found in Mycoplasma mycoides subsp. mycoides SC (strain CCUG 32753 / NCTC 10114 / PG1).